Consider the following 66-residue polypeptide: Prokaryotic ubiquitin-like protein UBact (66 aa).

The disordered stretch occupies residues 1-66; the sequence is MNMRYTLMPE…AERYRQRTGE (66 aa). Residues 30–66 are compositionally biased toward basic and acidic residues; it reads GGPRRPETGSPDKDNLLKRMRKVDPKQAERYRQRTGE. Residue Glu66 forms an Isoglutamyl lysine isopeptide (Glu-Lys) (interchain with K-? in acceptor proteins) linkage.

The protein belongs to the ubiquitin-like protein UBact family.

Its function is as follows. May function as a protein modifier covalently attached to lysine residues of substrate proteins. This may serve to target the modified proteins for degradation by proteasomes. This chain is Prokaryotic ubiquitin-like protein UBact, found in Nitrospira moscoviensis.